Reading from the N-terminus, the 130-residue chain is Small ribosomal subunit protein uS9 (130 aa).

Positions 109–130 (RVKERKKPGLKKARKARQFSKR) are disordered. Over residues 111–130 (KERKKPGLKKARKARQFSKR) the composition is skewed to basic residues.

The protein belongs to the universal ribosomal protein uS9 family.

This Mycoplasma mobile (strain ATCC 43663 / 163K / NCTC 11711) (Mesomycoplasma mobile) protein is Small ribosomal subunit protein uS9.